A 511-amino-acid chain; its full sequence is Alpha-amylase 2B (511 aa).

The signal sequence occupies residues 1 to 15; it reads MKFFLLLFTIGFCWA. Residue glutamine 16 is modified to Pyrrolidone carboxylic acid. 3 disulfides stabilise this stretch: cysteine 43-cysteine 101, cysteine 85-cysteine 130, and cysteine 156-cysteine 175. Ca(2+) is bound by residues asparagine 115, arginine 173, and aspartate 182. Arginine 210 is a binding site for chloride. Residue aspartate 212 is the Nucleophile of the active site. Histidine 216 is a binding site for Ca(2+). Catalysis depends on glutamate 248, which acts as the Proton donor. Chloride is bound by residues asparagine 313 and arginine 352. Intrachain disulfides connect cysteine 393–cysteine 399 and cysteine 465–cysteine 477.

Belongs to the glycosyl hydrolase 13 family. In terms of assembly, monomer. Ca(2+) is required as a cofactor. Requires chloride as cofactor.

The protein localises to the secreted. The enzyme catalyses Endohydrolysis of (1-&gt;4)-alpha-D-glucosidic linkages in polysaccharides containing three or more (1-&gt;4)-alpha-linked D-glucose units.. This is Alpha-amylase 2B (AMY2B) from Homo sapiens (Human).